The primary structure comprises 322 residues: tRNA-dihydrouridine synthase B (322 aa).

Residues 16–18 (PMA) and Gln-70 each bind FMN. The active-site Proton donor is the Cys-100. FMN contacts are provided by residues Lys-139, 200–202 (NGD), and 224–225 (GR).

It belongs to the Dus family. DusB subfamily. Requires FMN as cofactor.

It carries out the reaction a 5,6-dihydrouridine in tRNA + NAD(+) = a uridine in tRNA + NADH + H(+). It catalyses the reaction a 5,6-dihydrouridine in tRNA + NADP(+) = a uridine in tRNA + NADPH + H(+). Its function is as follows. Catalyzes the synthesis of 5,6-dihydrouridine (D), a modified base found in the D-loop of most tRNAs, via the reduction of the C5-C6 double bond in target uridines. This is tRNA-dihydrouridine synthase B from Vibrio vulnificus (strain CMCP6).